A 228-amino-acid chain; its full sequence is Urease accessory protein UreF (228 aa).

Belongs to the UreF family. As to quaternary structure, ureD, UreF and UreG form a complex that acts as a GTP-hydrolysis-dependent molecular chaperone, activating the urease apoprotein by helping to assemble the nickel containing metallocenter of UreC. The UreE protein probably delivers the nickel.

The protein localises to the cytoplasm. Functionally, required for maturation of urease via the functional incorporation of the urease nickel metallocenter. The polypeptide is Urease accessory protein UreF (Lachnoclostridium phytofermentans (strain ATCC 700394 / DSM 18823 / ISDg) (Clostridium phytofermentans)).